A 108-amino-acid polypeptide reads, in one-letter code: uncharacterized protein (108 aa).

This is an uncharacterized protein from Microplitis demolitor bracovirus (isolate Webb) (MdBV).